Consider the following 309-residue polypeptide: Putative G-protein coupled receptor B0244.4 (309 aa).

6 helical membrane passes run 39–59 (SIIFWIDFLIPCTLFVVACFL), 82–102 (YIFMVSRAISALTACVIMLAL), 114–134 (IYFLFFLIDDLSFYSLLGSYV), 162–182 (FAIANLITSVVLAITTAMFQA), 204–224 (IMLVLILTSFLIPIVTLSFVL), and 256–276 (WTLFTFTLITLTEAIPSFYLV).

Belongs to the G-protein coupled receptor 1 family. B0244 subfamily.

Its subcellular location is the cell membrane. This is Putative G-protein coupled receptor B0244.4 from Caenorhabditis elegans.